Reading from the N-terminus, the 498-residue chain is Acetyl-coenzyme A carboxylase carboxyl transferase subunit beta, chloroplastic (498 aa).

Residues 36–59 (SVNEDPIINDMDKDIPSGSDSDNS) form a disordered region. The region spanning 231-498 (LWVQCENCYG…FFPLNQNSIK (268 aa)) is the CoA carboxyltransferase N-terminal domain. Residues C235, C238, C254, and C257 each coordinate Zn(2+). A C4-type zinc finger spans residues 235–257 (CENCYGLNYKRFLKSKMNICEHC).

It belongs to the AccD/PCCB family. As to quaternary structure, acetyl-CoA carboxylase is a heterohexamer composed of biotin carboxyl carrier protein, biotin carboxylase and 2 subunits each of ACCase subunit alpha and ACCase plastid-coded subunit beta (accD). Zn(2+) serves as cofactor.

The protein resides in the plastid. Its subcellular location is the chloroplast stroma. The enzyme catalyses N(6)-carboxybiotinyl-L-lysyl-[protein] + acetyl-CoA = N(6)-biotinyl-L-lysyl-[protein] + malonyl-CoA. It participates in lipid metabolism; malonyl-CoA biosynthesis; malonyl-CoA from acetyl-CoA: step 1/1. Its function is as follows. Component of the acetyl coenzyme A carboxylase (ACC) complex. Biotin carboxylase (BC) catalyzes the carboxylation of biotin on its carrier protein (BCCP) and then the CO(2) group is transferred by the transcarboxylase to acetyl-CoA to form malonyl-CoA. The sequence is that of Acetyl-coenzyme A carboxylase carboxyl transferase subunit beta, chloroplastic from Morus indica (Mulberry).